Reading from the N-terminus, the 56-residue chain is Mitoregulin (56 aa).

The Mitochondrial matrix segment spans residues 2–9 (ADVSERTL). The helical transmembrane segment at 10-27 (QVSVLVAFASGVVLGWQA) threads the bilayer. Residues 28-56 (NRLRRRYLDWRKRRLQDKLATTQKKLDLA) are Mitochondrial intermembrane-facing.

The protein belongs to the mitoregulin family. Interacts with mitochondrial trifunctional enzyme, a heterotetrameric complex composed of 2 HADHA subunits and 2 HADHB subunits. Interacts with cytochrome b5 reductase CYB5R3; the interaction is required to maintain cellular lipid composition and leads to stimulation of mitochondrial respiratory complex I activity. Interacts with ATP synthase subunit ATP5F1B/ATP5B. In terms of tissue distribution, enriched in heart and skeletal muscle (at protein level). Also enriched in adipose tissue with lower levels detected in liver, pancreas and brain (at protein level). Higher levels in differentiated myotubes than in satellite cells.

It is found in the mitochondrion inner membrane. Positively regulates mitochondrial complex assembly and/or stability. Increases mitochondrial membrane potential while decreasing mitochondrial reactive oxygen species. Increases mitochondrial respiration rate. Increased mitochondrial respiratory activity promotes myogenic differentiation which facilitates muscle growth and regeneration. Increases mitochondrial calcium retention capacity. Plays a role in maintenance of cellular lipid composition through its interaction with cytochrome b5 reductase CYB5R3 which is required for mitochondrial respiratory complex I activity. Interacts with the mitochondrial trifunctional enzyme complex (MTE) and enhances fatty acid beta-oxidation. Not required for MTE formation or stability. Modulates triglyceride clearance in adipocytes through its role in regulating fatty acid beta-oxidation and lipolysis. This chain is Mitoregulin, found in Mus musculus (Mouse).